A 207-amino-acid chain; its full sequence is Dephospho-CoA kinase (207 aa).

The 197-residue stretch at 11 to 207 folds into the DPCK domain; it reads RIGLTGGIAS…LLKMSPTAEL (197 aa). ATP is bound at residue 19–24; the sequence is ASGKSS.

It belongs to the CoaE family.

It localises to the cytoplasm. It carries out the reaction 3'-dephospho-CoA + ATP = ADP + CoA + H(+). Its pathway is cofactor biosynthesis; coenzyme A biosynthesis; CoA from (R)-pantothenate: step 5/5. In terms of biological role, catalyzes the phosphorylation of the 3'-hydroxyl group of dephosphocoenzyme A to form coenzyme A. This chain is Dephospho-CoA kinase, found in Synechococcus sp. (strain CC9605).